We begin with the raw amino-acid sequence, 78 residues long: Large ribosomal subunit protein uL29 (78 aa).

The disordered stretch occupies residues 59 to 78 (VESERKRGKSLSSTQTQKEE). Residues 68–78 (SLSSTQTQKEE) are compositionally biased toward polar residues.

Belongs to the universal ribosomal protein uL29 family.

The protein is Large ribosomal subunit protein uL29 of Synechococcus sp. (strain JA-3-3Ab) (Cyanobacteria bacterium Yellowstone A-Prime).